The chain runs to 607 residues: Pescadillo homolog (607 aa).

Positions 301 to 341 (ANVVEQSEKTTEDADEEPETEENLDEFKPADGADNEDSKSL) are disordered. Over residues 313–324 (DADEEPETEENL) the composition is skewed to acidic residues. Residues 325 to 339 (DEFKPADGADNEDSK) are compositionally biased toward basic and acidic residues. Residues 348–441 (SNTSLFSNFT…ILERTDLYAC (94 aa)) form the BRCT domain. Residues 497 to 604 (ENVEQIDDAE…RDIEKRKKLK (108 aa)) are a coiled coil. The segment at 531-607 (QNSKSAKKTK…EKRKKLKVEN (77 aa)) is disordered. Composition is skewed to basic and acidic residues over residues 544–561 (RDTL…KELS) and 595–607 (RDIE…KVEN).

It belongs to the pescadillo family. As to quaternary structure, component of the NOP7 complex, composed of erb1/SPBC4F6.13c, ppp1/SPBC19F5.05c and ytm1/SPAC890.04c. Within the NOP7 complex erb1/SPBC4F6.13c appears to interact directly with ppp1/SPBC19F5.05c and ytm1/SPAC890.04c. The NOP7 complex also associates with the 66S pre-ribosome.

The protein resides in the nucleus. It localises to the nucleoplasm. Its subcellular location is the nucleolus. Component of the NOP7 complex, which is required for maturation of the 25S and 5.8S ribosomal RNAs and formation of the 60S ribosome. The protein is Pescadillo homolog (ppp1) of Schizosaccharomyces pombe (strain 972 / ATCC 24843) (Fission yeast).